Reading from the N-terminus, the 656-residue chain is MFLERVNQKTGEREWVVAQEDYDMAQELARSRFGDMILDFDRNDKFLEGLKTTIPEKKKENGDGLVHVLDIANITFPGTGTGLLSLMAAREGADKVTALEVFKPMGDCARHITGCSPWAEKITVISERSTDVSQIGGTAADIIVAEVFDTELIGEGALRTFKEALQRLAKPGCRVVPSSGNVYIVPVESHLLKMFNTIPRINGGEDEHPLGTCSGTASVFDVQLSELETHEFRELAEPIVAFKFDFENEEKIIYNESFVREAIAHTSGTIDAIMMWWDIDMDGKGETFIDMAPRWKNPKHYAWRDHWMQAVYYLPDKKCVEKAQKFEIICNHDEFSIWFSDVGKDSTRSYCVCGLHSMLSRQTVYHINEMFEDQSFRAEVDRLSSGLNVVTVGEGSFVGLLAAKTAKTVTIIEPNERFRDIFHKYVLYYNMKNVHIVEKVTHLIEKPDIVIAEPFYMSAMNPWNHLRFLYDVEILKMLHGDDLKVEPHLGTLKAIPECFEDLHKIAADVNTVNGFDLSYFDRISTKARAATDAIVDEQSLWEYAGTVKGEPVELLTFPVDGRILSRKCVGKMDNMQSSNGIPIWMEWQFGDLTLSTGLLSTSESRKPCWNKGYKQGVYFPITNLQNESSINLNALFDKSSGDITFQFKKFDVQSGN.

2 consecutive SAM-dependent MTase PRMT-type domains span residues 12–338 and 343–656; these read EREW…FSIW and GKDS…QSGN.

The protein belongs to the class I-like SAM-binding methyltransferase superfamily. Protein arginine N-methyltransferase family. PRMT7 subfamily.

In terms of biological role, arginine methyltransferase that can both catalyze the formation of omega-N monomethylarginine (MMA) and symmetrical dimethylarginine (sDMA). This Caenorhabditis briggsae protein is Protein arginine N-methyltransferase 7 (prmt-7).